The sequence spans 369 residues: NAD(P)H-quinone oxidoreductase subunit 1, chloroplastic (369 aa).

The next 8 membrane-spanning stretches (helical) occupy residues 29 to 49 (IWIIVSILTTIVGVTLGVLVI), 97 to 117 (IWLFNVGPAIVVIPVFLSYLV), 129 to 149 (LGIGVFFWIAVSSIAPLGLLM), 167 to 187 (AAQSISYEIPLALCVLSISLL), 205 to 225 (LLGWNLWRQPIGFLIFFISSL), 255 to 275 (FGLFYVGSYLNLLVSSLFVTV), 305 to 325 (IINAIIGIIITLTKAYLFLFV), and 348 to 368 (FLLPVALGNLLLTASFQILLL).

This sequence belongs to the complex I subunit 1 family. NDH is composed of at least 16 different subunits, 5 of which are encoded in the nucleus.

Its subcellular location is the plastid. It localises to the chloroplast thylakoid membrane. It carries out the reaction a plastoquinone + NADH + (n+1) H(+)(in) = a plastoquinol + NAD(+) + n H(+)(out). It catalyses the reaction a plastoquinone + NADPH + (n+1) H(+)(in) = a plastoquinol + NADP(+) + n H(+)(out). In terms of biological role, NDH shuttles electrons from NAD(P)H:plastoquinone, via FMN and iron-sulfur (Fe-S) centers, to quinones in the photosynthetic chain and possibly in a chloroplast respiratory chain. The immediate electron acceptor for the enzyme in this species is believed to be plastoquinone. Couples the redox reaction to proton translocation, and thus conserves the redox energy in a proton gradient. The protein is NAD(P)H-quinone oxidoreductase subunit 1, chloroplastic of Angiopteris evecta (Mule's foot fern).